The chain runs to 140 residues: Nucleoside diphosphate kinase (140 aa).

Positions 11, 59, 87, 93, 104, and 114 each coordinate ATP. Catalysis depends on H117, which acts as the Pros-phosphohistidine intermediate.

It belongs to the NDK family. Homotetramer. Requires Mg(2+) as cofactor.

The protein localises to the cytoplasm. The catalysed reaction is a 2'-deoxyribonucleoside 5'-diphosphate + ATP = a 2'-deoxyribonucleoside 5'-triphosphate + ADP. It carries out the reaction a ribonucleoside 5'-diphosphate + ATP = a ribonucleoside 5'-triphosphate + ADP. Its function is as follows. Major role in the synthesis of nucleoside triphosphates other than ATP. The ATP gamma phosphate is transferred to the NDP beta phosphate via a ping-pong mechanism, using a phosphorylated active-site intermediate. The polypeptide is Nucleoside diphosphate kinase (Beijerinckia indica subsp. indica (strain ATCC 9039 / DSM 1715 / NCIMB 8712)).